A 199-amino-acid polypeptide reads, in one-letter code: ATP synthase subunit a (199 aa).

6 helical membrane passes run 2-22 (TNVY…LFYF), 25-45 (SMLG…FSYT), 53-73 (VISV…YFMY), 80-100 (MIEF…LTFI), 143-163 (VNVL…ELYL), and 164-184 (GIFY…VFFI).

It belongs to the ATPase A chain family. In terms of assembly, F-type ATPases have 2 components, CF(1) - the catalytic core - and CF(0) - the membrane proton channel. CF(1) has five subunits: alpha(3), beta(3), gamma(1), delta(1), epsilon(1). CF(0) has three main subunits: a, b and c.

It localises to the mitochondrion inner membrane. In terms of biological role, mitochondrial membrane ATP synthase (F(1)F(0) ATP synthase or Complex V) produces ATP from ADP in the presence of a proton gradient across the membrane which is generated by electron transport complexes of the respiratory chain. F-type ATPases consist of two structural domains, F(1) - containing the extramembraneous catalytic core and F(0) - containing the membrane proton channel, linked together by a central stalk and a peripheral stalk. During catalysis, ATP synthesis in the catalytic domain of F(1) is coupled via a rotary mechanism of the central stalk subunits to proton translocation. Key component of the proton channel; it may play a direct role in the translocation of protons across the membrane. This chain is ATP synthase subunit a (ATP6), found in Ascaris suum (Pig roundworm).